The sequence spans 72 residues: Translation initiation factor IF-1 (72 aa).

An S1-like domain is found at 1–72; that stretch reads MAKDDVIEVD…DKGRITFRYK (72 aa).

The protein belongs to the IF-1 family. Component of the 30S ribosomal translation pre-initiation complex which assembles on the 30S ribosome in the order IF-2 and IF-3, IF-1 and N-formylmethionyl-tRNA(fMet); mRNA recruitment can occur at any time during PIC assembly.

The protein resides in the cytoplasm. One of the essential components for the initiation of protein synthesis. Stabilizes the binding of IF-2 and IF-3 on the 30S subunit to which N-formylmethionyl-tRNA(fMet) subsequently binds. Helps modulate mRNA selection, yielding the 30S pre-initiation complex (PIC). Upon addition of the 50S ribosomal subunit IF-1, IF-2 and IF-3 are released leaving the mature 70S translation initiation complex. The sequence is that of Translation initiation factor IF-1 from Wolinella succinogenes (strain ATCC 29543 / DSM 1740 / CCUG 13145 / JCM 31913 / LMG 7466 / NCTC 11488 / FDC 602W) (Vibrio succinogenes).